A 204-amino-acid polypeptide reads, in one-letter code: General odorant-binding protein 67 (204 aa).

The signal sequence occupies residues 1–22 (MNPVVCAFGVIFVVVTLELVVA). 3 disulfide bridges follow: Cys-57-Cys-85, Cys-81-Cys-147, and Cys-128-Cys-157.

This sequence belongs to the PBP/GOBP family.

Its subcellular location is the secreted. Present in the aqueous fluid surrounding olfactory sensory dendrites and are thought to aid in the capture and transport of hydrophobic odorants into and through this fluid. The polypeptide is General odorant-binding protein 67 (Obp67) (Anopheles gambiae (African malaria mosquito)).